The primary structure comprises 317 residues: Apolipoprotein E (317 aa).

The N-terminal stretch at 1-18 (MKVLWAALLVTFLAGCQA) is a signal peptide. A run of 8 repeats spans residues 80 to 101 (TLMD…EQLS), 102 to 123 (PVAE…ARLG), 124 to 145 (ADME…AMLG), 146 to 167 (QSTE…KRLL), 168 to 189 (RDAD…EGAE), 190 to 211 (RGVS…VRAA), 212 to 233 (TVGS…ERLR), and 234 to 255 (ARME…EQVA). The tract at residues 80-255 (TLMDETMKEL…RLDEVKEQVA (176 aa)) is 8 X 22 AA approximate tandem repeats. Position 143 is a methionine sulfoxide (M143). S147 carries the post-translational modification Phosphoserine. Residues 158-168 (HLRKLRKRLLR) are LDL and other lipoprotein receptors binding. 162–165 (LRKR) serves as a coordination point for heparin. A lipid-binding and lipoprotein association region spans residues 210 to 290 (AATVGSLASQ…SWFEPLVEDM (81 aa)). Heparin is bound at residue 229 to 236 (GERLRARM). The segment at 266-317 (QQISLQAEAFQARLKSWFEPLVEDMQRQWAGLVEKVQAAVGASTAPVPSDNH) is homooligomerization. A specificity for association with VLDL region spans residues 278-290 (RLKSWFEPLVEDM).

This sequence belongs to the apolipoprotein A1/A4/E family. Homotetramer. May interact with ABCA1; functionally associated with ABCA1 in the biogenesis of HDLs. May interact with APP/A4 amyloid-beta peptide; the interaction is extremely stable in vitro but its physiological significance is unclear. May interact with MAPT. May interact with MAP2. In the cerebrospinal fluid, interacts with secreted SORL1. Interacts with PMEL; this allows the loading of PMEL luminal fragment on ILVs to induce fibril nucleation. Post-translationally, APOE exists as multiple glycosylated and sialylated glycoforms within cells and in plasma. The extent of glycosylation and sialylation are tissue and context specific. In terms of processing, glycated in plasma VLDL. Phosphorylated by FAM20C in the extracellular medium.

It localises to the secreted. It is found in the extracellular space. The protein resides in the extracellular matrix. The protein localises to the extracellular vesicle. Its subcellular location is the endosome. It localises to the multivesicular body. Functionally, APOE is an apolipoprotein, a protein associating with lipid particles, that mainly functions in lipoprotein-mediated lipid transport between organs via the plasma and interstitial fluids. APOE is a core component of plasma lipoproteins and is involved in their production, conversion and clearance. Apolipoproteins are amphipathic molecules that interact both with lipids of the lipoprotein particle core and the aqueous environment of the plasma. As such, APOE associates with chylomicrons, chylomicron remnants, very low density lipoproteins (VLDL) and intermediate density lipoproteins (IDL) but shows a preferential binding to high-density lipoproteins (HDL). It also binds a wide range of cellular receptors including the LDL receptor/LDLR, the LDL receptor-related proteins LRP1, LRP2 and LRP8 and the very low-density lipoprotein receptor/VLDLR that mediate the cellular uptake of the APOE-containing lipoprotein particles. Finally, APOE also has a heparin-binding activity and binds heparan-sulfate proteoglycans on the surface of cells, a property that supports the capture and the receptor-mediated uptake of APOE-containing lipoproteins by cells. A main function of APOE is to mediate lipoprotein clearance through the uptake of chylomicrons, VLDLs, and HDLs by hepatocytes. APOE is also involved in the biosynthesis by the liver of VLDLs as well as their uptake by peripheral tissues ensuring the delivery of triglycerides and energy storage in muscle, heart and adipose tissues. By participating in the lipoprotein-mediated distribution of lipids among tissues, APOE plays a critical role in plasma and tissues lipid homeostasis. APOE is also involved in two steps of reverse cholesterol transport, the HDLs-mediated transport of cholesterol from peripheral tissues to the liver, and thereby plays an important role in cholesterol homeostasis. First, it is functionally associated with ABCA1 in the biogenesis of HDLs in tissues. Second, it is enriched in circulating HDLs and mediates their uptake by hepatocytes. APOE also plays an important role in lipid transport in the central nervous system, regulating neuron survival and sprouting. The protein is Apolipoprotein E (APOE) of Theropithecus gelada (Gelada baboon).